Here is a 261-residue protein sequence, read N- to C-terminus: Indole-3-glycerol phosphate synthase (261 aa).

This sequence belongs to the TrpC family.

The enzyme catalyses 1-(2-carboxyphenylamino)-1-deoxy-D-ribulose 5-phosphate + H(+) = (1S,2R)-1-C-(indol-3-yl)glycerol 3-phosphate + CO2 + H2O. The protein operates within amino-acid biosynthesis; L-tryptophan biosynthesis; L-tryptophan from chorismate: step 4/5. This is Indole-3-glycerol phosphate synthase from Campylobacter concisus (strain 13826).